A 365-amino-acid chain; its full sequence is GTPase Obg (365 aa).

The 159-residue stretch at 2 to 160 (ESFVDEVAIE…KFLRLSLKLL (159 aa)) folds into the Obg domain. The OBG-type G domain occupies 161–329 (ADVGIVGLPN…LLEAMDEAFF (169 aa)). Residues 167-174 (GLPNAGKS), 192-196 (FTTLS), 215-218 (DIPG), 282-285 (NKID), and 310-312 (SAD) contribute to the GTP site. Mg(2+)-binding residues include serine 174 and threonine 194.

The protein belongs to the TRAFAC class OBG-HflX-like GTPase superfamily. OBG GTPase family. In terms of assembly, monomer. Mg(2+) serves as cofactor.

Its subcellular location is the cytoplasm. An essential GTPase which binds GTP, GDP and possibly (p)ppGpp with moderate affinity, with high nucleotide exchange rates and a fairly low GTP hydrolysis rate. Plays a role in control of the cell cycle, stress response, ribosome biogenesis and in those bacteria that undergo differentiation, in morphogenesis control. In Leptospira borgpetersenii serovar Hardjo-bovis (strain JB197), this protein is GTPase Obg.